A 642-amino-acid polypeptide reads, in one-letter code: Threonine--tRNA ligase (642 aa).

Positions 1–61 (MPIITLPDGS…EADASLAIIT (61 aa)) constitute a TGS domain. The catalytic stretch occupies residues 243–534 (DHRKIGKQLD…LTEEYAGLFP (292 aa)). 3 residues coordinate Zn(2+): cysteine 334, histidine 385, and histidine 511.

This sequence belongs to the class-II aminoacyl-tRNA synthetase family. Homodimer. Zn(2+) serves as cofactor.

The protein resides in the cytoplasm. It catalyses the reaction tRNA(Thr) + L-threonine + ATP = L-threonyl-tRNA(Thr) + AMP + diphosphate + H(+). Functionally, catalyzes the attachment of threonine to tRNA(Thr) in a two-step reaction: L-threonine is first activated by ATP to form Thr-AMP and then transferred to the acceptor end of tRNA(Thr). Also edits incorrectly charged L-seryl-tRNA(Thr). This is Threonine--tRNA ligase from Aeromonas hydrophila subsp. hydrophila (strain ATCC 7966 / DSM 30187 / BCRC 13018 / CCUG 14551 / JCM 1027 / KCTC 2358 / NCIMB 9240 / NCTC 8049).